A 451-amino-acid polypeptide reads, in one-letter code: Phosphoglucosamine mutase (451 aa).

Ser101 acts as the Phosphoserine intermediate in catalysis. Mg(2+)-binding residues include Ser101, Asp240, Asp242, and Asp244. Ser101 is subject to Phosphoserine.

It belongs to the phosphohexose mutase family. Mg(2+) is required as a cofactor. In terms of processing, activated by phosphorylation.

It carries out the reaction alpha-D-glucosamine 1-phosphate = D-glucosamine 6-phosphate. Functionally, catalyzes the conversion of glucosamine-6-phosphate to glucosamine-1-phosphate. The sequence is that of Phosphoglucosamine mutase from Streptococcus pyogenes serotype M1.